The chain runs to 281 residues: Small ribosomal subunit protein uS2 (281 aa).

It belongs to the universal ribosomal protein uS2 family.

This Chlamydia muridarum (strain MoPn / Nigg) protein is Small ribosomal subunit protein uS2 (rpsB).